A 94-amino-acid polypeptide reads, in one-letter code: Small ribosomal subunit protein uS19 (94 aa).

It belongs to the universal ribosomal protein uS19 family.

Protein S19 forms a complex with S13 that binds strongly to the 16S ribosomal RNA. This chain is Small ribosomal subunit protein uS19, found in Buchnera aphidicola subsp. Cinara cedri (strain Cc).